The primary structure comprises 559 residues: 2-isopropylmalate synthase (559 aa).

One can recognise a Pyruvate carboxyltransferase domain in the interval Pro-30–Lys-304. Residues Asp-39, His-243, His-245, and Asn-279 each contribute to the Mg(2+) site. The segment at Val-436–Ser-559 is regulatory domain.

The protein belongs to the alpha-IPM synthase/homocitrate synthase family. LeuA type 2 subfamily. In terms of assembly, homodimer. It depends on Mg(2+) as a cofactor.

The protein localises to the cytoplasm. It carries out the reaction 3-methyl-2-oxobutanoate + acetyl-CoA + H2O = (2S)-2-isopropylmalate + CoA + H(+). The protein operates within amino-acid biosynthesis; L-leucine biosynthesis; L-leucine from 3-methyl-2-oxobutanoate: step 1/4. Its function is as follows. Catalyzes the condensation of the acetyl group of acetyl-CoA with 3-methyl-2-oxobutanoate (2-ketoisovalerate) to form 3-carboxy-3-hydroxy-4-methylpentanoate (2-isopropylmalate). The chain is 2-isopropylmalate synthase from Alcanivorax borkumensis (strain ATCC 700651 / DSM 11573 / NCIMB 13689 / SK2).